Consider the following 85-residue polypeptide: ATP synthase subunit c (85 aa).

2 helical membrane passes run 10–30 (IAVG…FAIL) and 53–73 (FIIA…ALLF).

It belongs to the ATPase C chain family. In terms of assembly, F-type ATPases have 2 components, F(1) - the catalytic core - and F(0) - the membrane proton channel. F(1) has five subunits: alpha(3), beta(3), gamma(1), delta(1), epsilon(1). F(0) has three main subunits: a(1), b(2) and c(10-14). The alpha and beta chains form an alternating ring which encloses part of the gamma chain. F(1) is attached to F(0) by a central stalk formed by the gamma and epsilon chains, while a peripheral stalk is formed by the delta and b chains.

It localises to the cell inner membrane. In terms of biological role, f(1)F(0) ATP synthase produces ATP from ADP in the presence of a proton or sodium gradient. F-type ATPases consist of two structural domains, F(1) containing the extramembraneous catalytic core and F(0) containing the membrane proton channel, linked together by a central stalk and a peripheral stalk. During catalysis, ATP synthesis in the catalytic domain of F(1) is coupled via a rotary mechanism of the central stalk subunits to proton translocation. Its function is as follows. Key component of the F(0) channel; it plays a direct role in translocation across the membrane. A homomeric c-ring of between 10-14 subunits forms the central stalk rotor element with the F(1) delta and epsilon subunits. The polypeptide is ATP synthase subunit c (Aliivibrio salmonicida (strain LFI1238) (Vibrio salmonicida (strain LFI1238))).